Reading from the N-terminus, the 357-residue chain is UDP-N-acetylglucosamine--N-acetylmuramyl-(pentapeptide) pyrophosphoryl-undecaprenol N-acetylglucosamine transferase (357 aa).

UDP-N-acetyl-alpha-D-glucosamine-binding positions include 13 to 15 (SAG), Arg166, Ser197, and Gln292.

Belongs to the glycosyltransferase 28 family. MurG subfamily.

Its subcellular location is the cell membrane. The enzyme catalyses di-trans,octa-cis-undecaprenyl diphospho-N-acetyl-alpha-D-muramoyl-L-alanyl-D-glutamyl-meso-2,6-diaminopimeloyl-D-alanyl-D-alanine + UDP-N-acetyl-alpha-D-glucosamine = di-trans,octa-cis-undecaprenyl diphospho-[N-acetyl-alpha-D-glucosaminyl-(1-&gt;4)]-N-acetyl-alpha-D-muramoyl-L-alanyl-D-glutamyl-meso-2,6-diaminopimeloyl-D-alanyl-D-alanine + UDP + H(+). It functions in the pathway cell wall biogenesis; peptidoglycan biosynthesis. Functionally, cell wall formation. Catalyzes the transfer of a GlcNAc subunit on undecaprenyl-pyrophosphoryl-MurNAc-pentapeptide (lipid intermediate I) to form undecaprenyl-pyrophosphoryl-MurNAc-(pentapeptide)GlcNAc (lipid intermediate II). In Clostridium novyi (strain NT), this protein is UDP-N-acetylglucosamine--N-acetylmuramyl-(pentapeptide) pyrophosphoryl-undecaprenol N-acetylglucosamine transferase.